The sequence spans 121 residues: Large ribosomal subunit protein eL18 (121 aa).

The protein belongs to the eukaryotic ribosomal protein eL18 family.

In Methanospirillum hungatei JF-1 (strain ATCC 27890 / DSM 864 / NBRC 100397 / JF-1), this protein is Large ribosomal subunit protein eL18.